The sequence spans 593 residues: Progranulin (593 aa).

An N-terminal signal peptide occupies residues 1–17 (MWTLVSWVALTAGLVAG). The N-linked (GlcNAc...) asparagine glycan is linked to Asn118. Disulfide bonds link Cys126-Cys139 and Cys133-Cys149. Asn236 and Asn265 each carry an N-linked (GlcNAc...) asparagine glycan. Disulfide bonds link Cys284–Cys296, Cys290–Cys306, Cys297–Cys314, Cys307–Cys321, Cys315–Cys328, Cys322–Cys335, Cys366–Cys378, Cys372–Cys388, Cys397–Cys410, and Cys404–Cys416. Residue Asn368 is glycosylated (N-linked (GlcNAc...) asparagine). The N-linked (GlcNAc...) asparagine glycan is linked to Asn530.

The protein belongs to the granulin family. As to quaternary structure, progranulin is secreted as a homodimer. Interacts with SLPI; interaction protects progranulin from proteolysis. Interacts (via region corresponding to granulin-7 peptide) with CTSD; stabilizes CTSD and increases its proteolytic activity. Interacts (via region corresponding to granulin-7 peptide) with SORT1; this interaction mediates endocytosis and lysosome delivery of progranulin; interaction occurs at the neuronal cell surface in a stressed nervous system. Interacts with PSAP; facilitates lysosomal delivery of progranulin from the extracellular space and the biosynthetic pathway. Forms a complex with PSAP and M6PR; PSAP bridges the binding between progranulin and M6PR. Forms a complex with PSAP and SORT1; progranulin bridges the interaction between PSAP and SORT1; facilitates lysosomal targeting of PSAP via SORT1; interaction enhances PSAP uptake in primary cortical neurons. Interacts (via regions corresponding to granulin-2 and granulin-7 peptides) with GBA1; this interaction prevents aggregation of GBA1-SCARB2 complex via interaction with HSPA1A upon stress. Interacts (via region corresponding to granulin-7 peptide) with HSPA1A; mediates recruitment of HSPA1A to GBA1 and prevents GBA1 aggregation in response to stress. In terms of processing, cleaved by ELANE; proteolysis is blocked by SLPI and is concentration- and time-dependent and induces CXCL8/IL-8 production; granulin-3 and granulin-4 are resistant to ELANE. Cleaved by CTSL in lysosome thus regulating the maturation and turnover of progranulin within the lysosome. In myelogenous leukemic cell lines of promonocytic, promyelocytic, and proerythroid lineage, in fibroblasts, and very strongly in epithelial cell lines. Present in inflammatory cells and bone marrow. Highest levels in kidney.

Its subcellular location is the secreted. The protein localises to the lysosome. In terms of biological role, secreted protein that acts as a key regulator of lysosomal function and as a growth factor involved in inflammation, wound healing and cell proliferation. Regulates protein trafficking to lysosomes, and also the activity of lysosomal enzymes. Also facilitates the acidification of lysosomes, causing degradation of mature CTSD by CTSB. In addition, functions as a wound-related growth factor that acts directly on dermal fibroblasts and endothelial cells to promote division, migration and the formation of capillary-like tubule structures. Also promotes epithelial cell proliferation by blocking TNF-mediated neutrophil activation preventing release of oxidants and proteases. Moreover, modulates inflammation in neurons by preserving neurons survival, axonal outgrowth and neuronal integrity. Functionally, promotes proliferation of the epithelial cell line A431 in culture. Inhibits epithelial cell proliferation and induces epithelial cells to secrete IL-8. Its function is as follows. Stabilizes CTSD through interaction with CTSD leading to maintain its aspartic-type peptidase activity. This chain is Progranulin, found in Homo sapiens (Human).